The following is a 449-amino-acid chain: Naphthalene 1,2-dioxygenase system, large oxygenase component (449 aa).

The 99-residue stretch at 39–137 folds into the Rieske domain; that stretch reads WLFLTHDSLI…LNKKCLGLKE (99 aa). [2Fe-2S] cluster contacts are provided by cysteine 81, histidine 83, cysteine 101, and histidine 104. 3 residues coordinate Fe cation: histidine 208, histidine 213, and aspartate 362.

Belongs to the bacterial ring-hydroxylating dioxygenase alpha subunit family. The naphthalene dioxygenase (NDO) multicomponent enzyme system is composed of an electron transfer component and a dioxygenase component (iron sulfur protein (ISP)). The electron transfer component is composed of a ferredoxin reductase (NdoR) and a ferredoxin (NdoA), and the dioxygenase component is formed of a heterohexamer (trimer of heterodimers) of three large alpha subunits (NdoB) and three small beta subunits (NdoC). [2Fe-2S] cluster is required as a cofactor. It depends on Fe(2+) as a cofactor.

It carries out the reaction naphthalene + NADH + O2 + H(+) = (1R,2S)-1,2-dihydronaphthalene-1,2-diol + NAD(+). It participates in aromatic compound metabolism; naphthalene degradation. Functionally, component of the naphthalene dioxygenase (NDO) multicomponent enzyme system which catalyzes the incorporation of both atoms of molecular oxygen into naphthalene to form cis-(1R,2S)-dihydroxy-1,2-dihydronaphthalene. The alpha subunit has a catalytic role in the holoenzyme. Also able to catalyze the cis-dihydroxylation of biphenyl and phenanthrene. The protein is Naphthalene 1,2-dioxygenase system, large oxygenase component of Pseudomonas putida (Arthrobacter siderocapsulatus).